We begin with the raw amino-acid sequence, 489 residues long: MKYKDLRDFIAQLEQSGQLKRISREIDPYLEMTEISDRTLRAGGPALLFENPKGYTMPVLTNLFGTPDRVAMGMGQPNVAALRQVGIWLSYLKEPEPPRGFKELMEKLPIFKQVLNMPTKRLSSAPCQQRVLEGEAVDLDQIPIQHCWPGDVAPLVTWGLTITRGPYKKRQNLGIYRQQKIGKNKLIMRWLDHRGGAIDFREWQEAHPGERFPVVVALGADPATILGAVTPVPDTLSEYAFAGLLRGSRTEVVKAVSCDLEVPASAEIVLEGYLEPGEMAPEGPYGDHTGYYNEVDEFPVFTITHMTMRKDAIYHSTYTGRPPDEPAVLGVALNEVFVPLLQKQFPEIVDFYLPPEGCSYRMAVVTIKKRYPGHAKRVMLGVWSFLRQFMYTKFVIVCDDDINARDWKDVIWAITTRMDPARDTTLIEHTPIDYLDFASPVSGLGSKMGLDATNKWPGETNREWGQPIVQDEAVKQKIDALWDELNILG.

Asn172 is a Mn(2+) binding site. Residues Ile175–Arg177, Arg189–Leu191, and Arg194–Gly195 contribute to the prenylated FMN site. Glu238 contacts Mn(2+). Asp287 acts as the Proton donor in catalysis.

This sequence belongs to the UbiD family. In terms of assembly, homohexamer. Prenylated FMN is required as a cofactor. The cofactor is Mn(2+).

It localises to the cell membrane. It catalyses the reaction a 4-hydroxy-3-(all-trans-polyprenyl)benzoate + H(+) = a 2-(all-trans-polyprenyl)phenol + CO2. It functions in the pathway cofactor biosynthesis; ubiquinone biosynthesis. Catalyzes the decarboxylation of 3-octaprenyl-4-hydroxy benzoate to 2-octaprenylphenol, an intermediate step in ubiquinone biosynthesis. This Aeromonas hydrophila subsp. hydrophila (strain ATCC 7966 / DSM 30187 / BCRC 13018 / CCUG 14551 / JCM 1027 / KCTC 2358 / NCIMB 9240 / NCTC 8049) protein is 3-octaprenyl-4-hydroxybenzoate carboxy-lyase.